We begin with the raw amino-acid sequence, 258 residues long: tRNA (guanine-N(7)-)-methyltransferase (258 aa).

Residues glycine 76, 99 to 100 (EI), 132 to 133 (NA), and leucine 152 each bind S-adenosyl-L-methionine. The active site involves aspartate 155. 230–232 (TEE) serves as a coordination point for S-adenosyl-L-methionine.

Belongs to the class I-like SAM-binding methyltransferase superfamily. TrmB family.

It localises to the nucleus. It carries out the reaction guanosine(46) in tRNA + S-adenosyl-L-methionine = N(7)-methylguanosine(46) in tRNA + S-adenosyl-L-homocysteine. It participates in tRNA modification; N(7)-methylguanine-tRNA biosynthesis. Catalyzes the formation of N(7)-methylguanine at position 46 (m7G46) in tRNA. The chain is tRNA (guanine-N(7)-)-methyltransferase from Brugia malayi (Filarial nematode worm).